The primary structure comprises 209 residues: SelT-like protein (209 aa).

The first 22 residues, 1 to 22, serve as a signal peptide directing secretion; the sequence is MDKTQLILLGLPIFLLCSDLFN. The cysteines at positions 64 and 67 are disulfide-linked.

It belongs to the SelWTH family. SELT subfamily.

The protein is SelT-like protein of Arabidopsis thaliana (Mouse-ear cress).